A 124-amino-acid chain; its full sequence is Histone H2A, embryonic (124 aa).

Residues 1 to 18 show a composition bias toward basic residues; the sequence is MSGRGKSGKARTKAKTRS. The tract at residues 1–21 is disordered; that stretch reads MSGRGKSGKARTKAKTRSSRA. Position 2 is an N-acetylserine (Ser-2). Ser-2 is modified (phosphoserine). Gln-104 is modified (N5-methylglutamine). Lys-119 is covalently cross-linked (Glycyl lysine isopeptide (Lys-Gly) (interchain with G-Cter in ubiquitin)).

Belongs to the histone H2A family. In terms of assembly, the nucleosome is a histone octamer containing two molecules each of H2A, H2B, H3 and H4 assembled in one H3-H4 heterotetramer and two H2A-H2B heterodimers. The octamer wraps approximately 147 bp of DNA. Monoubiquitination of Lys-119 gives a specific tag for epigenetic transcriptional repression. Post-translationally, phosphorylation of Ser-2 directly represses transcription.

It localises to the nucleus. It is found in the chromosome. In terms of biological role, core component of nucleosome. Nucleosomes wrap and compact DNA into chromatin, limiting DNA accessibility to the cellular machineries which require DNA as a template. Histones thereby play a central role in transcription regulation, DNA repair, DNA replication and chromosomal stability. DNA accessibility is regulated via a complex set of post-translational modifications of histones, also called histone code, and nucleosome remodeling. The chain is Histone H2A, embryonic from Psammechinus miliaris (Green sea urchin).